A 105-amino-acid chain; its full sequence is Guanyl-specific ribonuclease U1 (105 aa).

Pyrrolidone carboxylic acid is present on Q1. 2 cysteine pairs are disulfide-bonded: C8–C103 and C51–C87. Residue H37 is part of the active site. Residue E57 is the Proton acceptor of the active site. The Proton donor role is filled by H92.

Belongs to the ribonuclease N1/T1 family.

It catalyses the reaction [RNA] containing guanosine + H2O = an [RNA fragment]-3'-guanosine-3'-phosphate + a 5'-hydroxy-ribonucleotide-3'-[RNA fragment].. In Ustilago sphaerogena (Smut fungus), this protein is Guanyl-specific ribonuclease U1.